Here is a 150-residue protein sequence, read N- to C-terminus: Pyruvoyl-dependent arginine decarboxylase (150 aa).

Residue Ser-42 is modified to Pyruvic acid (Ser).

Belongs to the PdaD family. It depends on pyruvate as a cofactor.

The catalysed reaction is L-arginine + H(+) = agmatine + CO2. The chain is Pyruvoyl-dependent arginine decarboxylase from Methanopyrus kandleri (strain AV19 / DSM 6324 / JCM 9639 / NBRC 100938).